The chain runs to 778 residues: Lon protease (778 aa).

The Lon N-terminal domain maps to 8-202; that stretch reads LPLIPLRGLI…NVLTVIKDEL (195 aa). 354–361 serves as a coordination point for ATP; sequence GPPGVGKT. The 182-residue stretch at 591-772 folds into the Lon proteolytic domain; the sequence is EDKIGVVTGM…DTVLENALIG (182 aa). Residues serine 678 and lysine 721 contribute to the active site.

This sequence belongs to the peptidase S16 family. Homohexamer. Organized in a ring with a central cavity.

The protein resides in the cytoplasm. It carries out the reaction Hydrolysis of proteins in presence of ATP.. Functionally, ATP-dependent serine protease that mediates the selective degradation of mutant and abnormal proteins as well as certain short-lived regulatory proteins. Required for cellular homeostasis and for survival from DNA damage and developmental changes induced by stress. Degrades polypeptides processively to yield small peptide fragments that are 5 to 10 amino acids long. Binds to DNA in a double-stranded, site-specific manner. The chain is Lon protease from Clostridium acetobutylicum (strain ATCC 824 / DSM 792 / JCM 1419 / IAM 19013 / LMG 5710 / NBRC 13948 / NRRL B-527 / VKM B-1787 / 2291 / W).